The following is a 157-amino-acid chain: Glutamyl-tRNA(Gln) amidotransferase subunit C, mitochondrial (157 aa).

It belongs to the GatC family. As to quaternary structure, subunit of the heterotrimeric GatCAB amidotransferase (AdT) complex, composed of A, B and C subunits.

It localises to the mitochondrion. The enzyme catalyses L-glutamyl-tRNA(Gln) + L-glutamine + ATP + H2O = L-glutaminyl-tRNA(Gln) + L-glutamate + ADP + phosphate + H(+). Its function is as follows. Allows the formation of correctly charged Gln-tRNA(Gln) through the transamidation of misacylated Glu-tRNA(Gln) in the mitochondria. The reaction takes place in the presence of glutamine and ATP through an activated gamma-phospho-Glu-tRNA(Gln). The protein is Glutamyl-tRNA(Gln) amidotransferase subunit C, mitochondrial of Drosophila virilis (Fruit fly).